The primary structure comprises 511 residues: MKKRALVSVSDKTGVVEFVKGLLEQGIEVISTGGTKKLLEENGLQVIGISEVTGFPEIMDGRVKTLHPNIHGGLLAVRDNEMHVAQMNELGIQPIDFVVVNLYPFKETIAKPDVTFADAIENIDIGGPTMIRSAAKNHKFVSVIVDPVDYDVVLAELKENGEVTEETKRKLAAKVFRHTAAYDALISNYLTKQMGEESPETVTVTFEKKQDLRYGENPHQKATFYKAPFAATSSVAYAEQLHGKELSYNNINDADAALSIVKEFTEPAVVAVKHMNPCGVGVGADIHEAYTRAYEADPVSIFGGIIAANREIDKATAEKLHEIFLEIVIAPSFSQEALEVLQSKKNLRLLTVNIEKATSASKKLTSVQGGLLVQEEDTLSLDEDAISIPTKREPSEQEWKDLKLAWKVVKHVKSNAIVLANDNMTVGVGAGQMNRVGSAKIAITQAGEKAQGSALASDAFFPMPDTVEEAAKAGITAIIQPGGSIRDEDSIKMADAYGITMVFTGVRHFKH.

Residues 1–145 (MKKRALVSVS…KNHKFVSVIV (145 aa)) form the MGS-like domain.

The protein belongs to the PurH family.

It carries out the reaction (6R)-10-formyltetrahydrofolate + 5-amino-1-(5-phospho-beta-D-ribosyl)imidazole-4-carboxamide = 5-formamido-1-(5-phospho-D-ribosyl)imidazole-4-carboxamide + (6S)-5,6,7,8-tetrahydrofolate. The catalysed reaction is IMP + H2O = 5-formamido-1-(5-phospho-D-ribosyl)imidazole-4-carboxamide. The protein operates within purine metabolism; IMP biosynthesis via de novo pathway; 5-formamido-1-(5-phospho-D-ribosyl)imidazole-4-carboxamide from 5-amino-1-(5-phospho-D-ribosyl)imidazole-4-carboxamide (10-formyl THF route): step 1/1. It participates in purine metabolism; IMP biosynthesis via de novo pathway; IMP from 5-formamido-1-(5-phospho-D-ribosyl)imidazole-4-carboxamide: step 1/1. In Bacillus mycoides (strain KBAB4) (Bacillus weihenstephanensis), this protein is Bifunctional purine biosynthesis protein PurH.